A 335-amino-acid polypeptide reads, in one-letter code: MAPAQQSRVLRCCSCHIFQAHQVKKSLKWTCKACGEKQSFVRAYGEGSGADCRRHVQKLNLLQGQVSELSLRSVEEAVNGSEEENAGPLQAEAGSQQAPSKPLESRWLKYLDKGCEDQELDRGRPALKTQLSTSAERPSSPAQPRKRKWNQRTGQPAHSLHGQGVDSVEDNFEHQDSTGLFGTEQQGTSPALSTANHTRELGFPRWKLPSPVTQVNAPSSKWARFLLAPGNSPQVDEKPSPLQEATMLADLAQGTVENKTPVEGHFSRAPAIRPPQAIHTTTPQLDRPDRKTREQPRDMGTPRADGRPLAQGTQKAPPLQLHNLFTTGEDFDDDL.

2 disordered regions span residues 75 to 102 (EEAV…PSKP) and 118 to 194 (QELD…ALST). Serine 100 is subject to Phosphoserine. The segment covering 129 to 142 (TQLSTSAERPSSPA) has biased composition (polar residues). A Nuclear localization signal (NLS) motif is present at residues 145-148 (RKRK). Residues 177–194 (STGLFGTEQQGTSPALST) show a composition bias toward polar residues. The segment at 203–230 (FPRWKLPSPVTQVNAPSSKWARFLLAPG) is necessary for the association with the MRN complex. Residues 273–335 (RPPQAIHTTT…TTGEDFDDDL (63 aa)) are disordered. The span at 286–297 (DRPDRKTREQPR) shows a compositional bias: basic and acidic residues.

Belongs to the MRNIP family. In terms of assembly, associates with the MRE11-RAD50-NBN (MRN) damage-sensing complex; this association is constitutive. Interacts with MRE11. Interacts with NBN. Interacts with RAD50. Phosphorylated; phosphorylation is constitutive and occurs in the absence of any DNA-damaging stimulus. Phosphorylation is necessary for its nuclear retention.

It is found in the nucleus. It localises to the nucleoplasm. In terms of biological role, plays a role in the cellular response to DNA damage and the maintenance of genome stability through its association with the MRN damage-sensing complex. Promotes chromatin loading and activity of the MRN complex to facilitate subsequent ATM-mediated DNA damage response signaling and DNA repair. The sequence is that of MRN complex-interacting protein from Mus musculus (Mouse).